Reading from the N-terminus, the 327-residue chain is MPPNPTPPRRATTTTTRATSGVRRGEEEQGGMAVSASAGEEEEAFEEVDPTGRFGRYADVLGLGSVKKVYRGFDQEEGIEVAWNRVRLRALADRDPAMVERLHAEVRLLRSLHHEHIIGFHKVWLDRDAGVLNFITEVCTSGSLREYRDRHRHVSVKALKKWARQILLGLDHLHTHDPCIIHRDLNCSNVFINGNTGQVKIGDLGLAAIVDKTHVAHTILGTPEFMAPELYTETYTESVDIYSYGMCVLEMVTREMPYAECDSVVQIYHSVTRGVPPAALKRIRDPELRAFIERCIGQPRNRPSAAELLRDPFFAGIDDDDSTGTLG.

The segment at 1–48 is disordered; that stretch reads MPPNPTPPRRATTTTTRATSGVRRGEEEQGGMAVSASAGEEEEAFEEV. Residues 9-19 show a composition bias toward low complexity; that stretch reads RRATTTTTRAT. A compositionally biased stretch (acidic residues) spans 39–48; that stretch reads GEEEEAFEEV. A Protein kinase domain is found at 55–314; sequence GRYADVLGLG…AAELLRDPFF (260 aa). 136 to 139 lines the ATP pocket; that stretch reads TEVC. Asp-203 serves as the catalytic Proton acceptor.

It belongs to the protein kinase superfamily. Ser/Thr protein kinase family. WNK subfamily.

The enzyme catalyses L-seryl-[protein] + ATP = O-phospho-L-seryl-[protein] + ADP + H(+). It catalyses the reaction L-threonyl-[protein] + ATP = O-phospho-L-threonyl-[protein] + ADP + H(+). This Oryza sativa subsp. japonica (Rice) protein is Probable serine/threonine-protein kinase WNK5 (WNK5).